The primary structure comprises 267 residues: Ribonuclease HII (267 aa).

The RNase H type-2 domain maps to 57 to 245; that stretch reads WPVAGCDEVG…VVAARERHRA (189 aa). Residues Asp-63, Glu-64, and Asp-154 each contribute to the a divalent metal cation site.

This sequence belongs to the RNase HII family. The cofactor is Mn(2+). Mg(2+) is required as a cofactor.

The protein localises to the cytoplasm. The enzyme catalyses Endonucleolytic cleavage to 5'-phosphomonoester.. In terms of biological role, endonuclease that specifically degrades the RNA of RNA-DNA hybrids. The polypeptide is Ribonuclease HII (Nitrobacter hamburgensis (strain DSM 10229 / NCIMB 13809 / X14)).